Here is a 583-residue protein sequence, read N- to C-terminus: Aspartate--tRNA ligase (583 aa).

Glu-174 is a binding site for L-aspartate. Residues Gln-198–Lys-201 are aspartate. Arg-220 contributes to the L-aspartate binding site. Residues Arg-220–Glu-222 and Gln-229 each bind ATP. His-443 contacts L-aspartate. Glu-477 contacts ATP. Arg-484 lines the L-aspartate pocket. ATP is bound at residue Gly-529 to Arg-532.

This sequence belongs to the class-II aminoacyl-tRNA synthetase family. Type 1 subfamily. In terms of assembly, homodimer.

The protein resides in the cytoplasm. The catalysed reaction is tRNA(Asp) + L-aspartate + ATP = L-aspartyl-tRNA(Asp) + AMP + diphosphate. In terms of biological role, catalyzes the attachment of L-aspartate to tRNA(Asp) in a two-step reaction: L-aspartate is first activated by ATP to form Asp-AMP and then transferred to the acceptor end of tRNA(Asp). This chain is Aspartate--tRNA ligase, found in Streptococcus agalactiae serotype Ia (strain ATCC 27591 / A909 / CDC SS700).